Reading from the N-terminus, the 478-residue chain is MIRRLHDTNDLVRAFPRVHFVGIGGTGMSGIAEVMLTLGYEVSGSDNADNVATRRLASLGARIMRGHSAANVLGTDCVVVSSAIREDNPELMEARSQRIPIMPRAAMLAELMRFRRGIAVAGTHGKTTTTSLTAAVLSEGGLDPTFVIGGQLLAAGANAKLGGGQWLVAEADESDGSFLRLNPLMSIITNIDADHLENYGNDFARVQAAFAEFLQRLPFYGLAVLCIDDPEVAALAARTPRHVMSYGMSPQADVRAENVVQEGSRMRFTLRLPQGTSQEVVLALPGRHNVLNALAAAAVGWQLGVAPDAIARALEGFAGVGRRFNDLGEVTTASGAKVRIIDDYGHHPSELEAVFAAARGGWADKRLVVAFQPHRYSRTRDQFDKFAAVLSSVDALVLSEVYPAGEEPIAGADSHALARAIRARGRSEPVVVGKAAELASVLPDVLQDGDLLLMMGAGDIGAVATHIAVEGFKGEGEA.

ATP is bound at residue 122 to 128 (GTHGKTT).

It belongs to the MurCDEF family.

It is found in the cytoplasm. It carries out the reaction UDP-N-acetyl-alpha-D-muramate + L-alanine + ATP = UDP-N-acetyl-alpha-D-muramoyl-L-alanine + ADP + phosphate + H(+). Its pathway is cell wall biogenesis; peptidoglycan biosynthesis. Functionally, cell wall formation. In Stenotrophomonas maltophilia (strain K279a), this protein is UDP-N-acetylmuramate--L-alanine ligase.